The following is a 459-amino-acid chain: Cysteine--tRNA ligase (459 aa).

Cysteine 28 provides a ligand contact to Zn(2+). The short motif at 30–40 (VTIYDLCHIGH) is the 'HIGH' region element. The Zn(2+) site is built by cysteine 209, histidine 234, and glutamate 238. Positions 266-270 (KMSKS) match the 'KMSKS' region motif. Residue lysine 269 participates in ATP binding.

The protein belongs to the class-I aminoacyl-tRNA synthetase family. In terms of assembly, monomer. Requires Zn(2+) as cofactor.

The protein localises to the cytoplasm. The enzyme catalyses tRNA(Cys) + L-cysteine + ATP = L-cysteinyl-tRNA(Cys) + AMP + diphosphate. The protein is Cysteine--tRNA ligase of Shewanella baltica (strain OS223).